The following is a 350-amino-acid chain: Putative ankyrin repeat protein RBE_0589 (350 aa).

ANK repeat units lie at residues 81-110 (DGFTLLHKSINERDYNIAGFLLERKANPNI), 114-151 (DIVTPLNRIAGKPLSKTEEDFHMAKLLLQKGALTEPTD), and 153-182 (SGWTPIQYAVFNEKIGIVELLIDYGANLDI).

The sequence is that of Putative ankyrin repeat protein RBE_0589 from Rickettsia bellii (strain RML369-C).